We begin with the raw amino-acid sequence, 118 residues long: UPF0295 protein BC_0520 (118 aa).

The next 2 membrane-spanning stretches (helical) occupy residues 12–32 (IRTFALSLVFIGLFIAYLGVF) and 43–63 (FMMVGFLAVIASTVVYFWIGM).

Belongs to the UPF0295 family.

It localises to the cell membrane. This Bacillus cereus (strain ATCC 14579 / DSM 31 / CCUG 7414 / JCM 2152 / NBRC 15305 / NCIMB 9373 / NCTC 2599 / NRRL B-3711) protein is UPF0295 protein BC_0520.